Reading from the N-terminus, the 157-residue chain is Transcriptional repressor NrdR (157 aa).

A zinc finger lies at 3–34 (CPFCRHPDSRVIDSRTSDDGLSIRRRRQCPEC). Positions 46-136 (LSVIKRSGVV…VYQAFDSLED (91 aa)) constitute an ATP-cone domain.

Belongs to the NrdR family. Zn(2+) serves as cofactor.

Functionally, negatively regulates transcription of bacterial ribonucleotide reductase nrd genes and operons by binding to NrdR-boxes. In Leifsonia xyli subsp. xyli (strain CTCB07), this protein is Transcriptional repressor NrdR.